Reading from the N-terminus, the 397-residue chain is Putative 3'(2'),5'-bisphosphate nucleotidase, mitochondrial (397 aa).

A mitochondrion-targeting transit peptide spans 1–16; it reads MYILDTGARFSAVRFS. The active-site Proton acceptor is D91. Mg(2+)-binding residues include E114, D174, I176, and D177. T179 serves as the catalytic Proton acceptor. Positions 179, 305, 308, and 334 each coordinate adenosine 3',5'-bisphosphate. The AMP site is built by S305, K308, and D334. D334 serves as a coordination point for Mg(2+).

It belongs to the inositol monophosphatase superfamily. Mg(2+) is required as a cofactor.

It localises to the mitochondrion. It carries out the reaction 3'-phosphoadenylyl sulfate + H2O = adenosine 5'-phosphosulfate + phosphate. It catalyses the reaction adenosine 3',5'-bisphosphate + H2O = AMP + phosphate. The catalysed reaction is adenosine 2',5'-bisphosphate + H2O = AMP + phosphate. Its function is as follows. Phosphatase that converts adenosine 3'-phosphate 5'-phosphosulfate (PAPS) to adenosine 5'-phosphosulfate (APS) and 3'(2')-phosphoadenosine 5'-phosphate (PAP) to AMP. The chain is Putative 3'(2'),5'-bisphosphate nucleotidase, mitochondrial from Arabidopsis thaliana (Mouse-ear cress).